A 607-amino-acid chain; its full sequence is Elongation factor 4 (607 aa).

In terms of domain architecture, tr-type G spans 11-193 (ENIRNFSIIA…KIVEVVPPPE (183 aa)). Residues 23–28 (DHGKST) and 140–143 (NKID) contribute to the GTP site.

This sequence belongs to the TRAFAC class translation factor GTPase superfamily. Classic translation factor GTPase family. LepA subfamily.

It localises to the cell membrane. It carries out the reaction GTP + H2O = GDP + phosphate + H(+). Required for accurate and efficient protein synthesis under certain stress conditions. May act as a fidelity factor of the translation reaction, by catalyzing a one-codon backward translocation of tRNAs on improperly translocated ribosomes. Back-translocation proceeds from a post-translocation (POST) complex to a pre-translocation (PRE) complex, thus giving elongation factor G a second chance to translocate the tRNAs correctly. Binds to ribosomes in a GTP-dependent manner. The protein is Elongation factor 4 of Staphylococcus haemolyticus (strain JCSC1435).